The chain runs to 117 residues: G antigen 13 (117 aa).

Residues 1 to 117 (MSWRGRSTYY…PEEGEKQSQC (117 aa)) are disordered. Acidic residues-rich tracts occupy residues 32 to 45 (FSDE…EEGE) and 87 to 96 (ECEDGPDGQE). Residues 103 to 117 (EEVKTPEEGEKQSQC) are compositionally biased toward basic and acidic residues.

This sequence belongs to the GAGE family.

This is G antigen 13 from Homo sapiens (Human).